Here is a 948-residue protein sequence, read N- to C-terminus: Isoleucine--tRNA ligase (948 aa).

The short motif at 58–68 (PYANGDIHIGH) is the 'HIGH' region element. L-isoleucyl-5'-AMP is bound at residue glutamate 566. Positions 607-611 (KMSKS) match the 'KMSKS' region motif. Lysine 610 contributes to the ATP binding site. Residues cysteine 911, cysteine 914, cysteine 931, and cysteine 934 each contribute to the Zn(2+) site.

Belongs to the class-I aminoacyl-tRNA synthetase family. IleS type 1 subfamily. Monomer. Zn(2+) is required as a cofactor.

Its subcellular location is the cytoplasm. The enzyme catalyses tRNA(Ile) + L-isoleucine + ATP = L-isoleucyl-tRNA(Ile) + AMP + diphosphate. In terms of biological role, catalyzes the attachment of isoleucine to tRNA(Ile). As IleRS can inadvertently accommodate and process structurally similar amino acids such as valine, to avoid such errors it has two additional distinct tRNA(Ile)-dependent editing activities. One activity is designated as 'pretransfer' editing and involves the hydrolysis of activated Val-AMP. The other activity is designated 'posttransfer' editing and involves deacylation of mischarged Val-tRNA(Ile). In Vibrio vulnificus (strain YJ016), this protein is Isoleucine--tRNA ligase.